Reading from the N-terminus, the 518-residue chain is Serine--tRNA ligase, mitochondrial (518 aa).

The N-terminal 34 residues, 1–34 (MAASIVRRLGPLVAGRGLRLRGGCVCNQSFKRSF), are a transit peptide targeting the mitochondrion. Position 110 is an N6-acetyllysine (K110). Residue K195 is modified to N6-succinyllysine. 299–301 (TAE) serves as a coordination point for L-serine. 330-332 (RAE) serves as a coordination point for ATP. K337 is modified (N6-succinyllysine). V345 contributes to the ATP binding site. E352 lines the L-serine pocket. 418–421 (EVTS) lines the ATP pocket. Residue T453 participates in L-serine binding. The tract at residues 497–518 (PLQYIGPNQPQKPRLPGQPASS) is disordered.

Belongs to the class-II aminoacyl-tRNA synthetase family. Type-1 seryl-tRNA synthetase subfamily. In terms of assembly, homodimer. The tRNA molecule probably binds across the dimer. Post-translationally, two N-termini starting at positions 35 and 37 have been identified by direct sequencing.

It is found in the mitochondrion matrix. It carries out the reaction tRNA(Ser) + L-serine + ATP = L-seryl-tRNA(Ser) + AMP + diphosphate + H(+). The catalysed reaction is tRNA(Sec) + L-serine + ATP = L-seryl-tRNA(Sec) + AMP + diphosphate + H(+). It participates in aminoacyl-tRNA biosynthesis; selenocysteinyl-tRNA(Sec) biosynthesis; L-seryl-tRNA(Sec) from L-serine and tRNA(Sec): step 1/1. Its function is as follows. Catalyzes the attachment of serine to tRNA(Ser). Is also probably able to aminoacylate tRNA(Sec) with serine, to form the misacylated tRNA L-seryl-tRNA(Sec), which will be further converted into selenocysteinyl-tRNA(Sec). This is Serine--tRNA ligase, mitochondrial (SARS2) from Bos taurus (Bovine).